A 476-amino-acid polypeptide reads, in one-letter code: Aspartyl/glutamyl-tRNA(Asn/Gln) amidotransferase subunit B (476 aa).

This sequence belongs to the GatB/GatE family. GatB subfamily. In terms of assembly, heterotrimer of A, B and C subunits.

It catalyses the reaction L-glutamyl-tRNA(Gln) + L-glutamine + ATP + H2O = L-glutaminyl-tRNA(Gln) + L-glutamate + ADP + phosphate + H(+). It carries out the reaction L-aspartyl-tRNA(Asn) + L-glutamine + ATP + H2O = L-asparaginyl-tRNA(Asn) + L-glutamate + ADP + phosphate + 2 H(+). In terms of biological role, allows the formation of correctly charged Asn-tRNA(Asn) or Gln-tRNA(Gln) through the transamidation of misacylated Asp-tRNA(Asn) or Glu-tRNA(Gln) in organisms which lack either or both of asparaginyl-tRNA or glutaminyl-tRNA synthetases. The reaction takes place in the presence of glutamine and ATP through an activated phospho-Asp-tRNA(Asn) or phospho-Glu-tRNA(Gln). The chain is Aspartyl/glutamyl-tRNA(Asn/Gln) amidotransferase subunit B from Listeria monocytogenes serovar 1/2a (strain ATCC BAA-679 / EGD-e).